The following is a 1165-amino-acid chain: MTGLNGDDPDDYYLNLNQDEESLLRSRHSVGSGAPHRQGSLVRPERSRLNNPDNPHFYYAQKTQEQMNHLDVLPSSTGVNPNATRRSGSLRSKGSVRSKFSGRETDSYLLQDMNTTDKKASVKISDEGVAEDEFDKDGDVDNFEESSTQPINKSIKPLRKETNDTLSFWQMYCYFITFWAPAPILAFCGMPKKERQMAWREKVALISVILYIGAIVAFLTFGFTKTVCSSSKLRLKNNEVSTEFVVINGKAYELDTSSRSGIQDVEVDSDTLYGPWSDAGKDASFLFQNVNGNCHNLITPKSNSSIPHDDDNNLAWYFPCKLKNQDGSSKPNFTVENYAGWNCHTSKEDRDAFYGLKSKADVYFTWDGIKNSSRNLIVYNGDVLDLDLLDWLEKDDVDYPVVFDDLKTSNLQGYDLSLVLSNGHERKIARCLSEIIKVGEVDSKTVGCIASDVVLYVSLVFILSVVIIKFIIACYFRWTVARKQGAYIVDNKTMDKHTNDIEDWSNNIQTKAPLKEVDPHLRPKKYSKKSLGHKRASTFDLLKKHSSKMFQFNESVIDLDTSMSSSLQSSGSYRGMTTMTTQNAWKLSNENKAVHSRNPSTLLPTSSMFWNKATSSPVPGSSLIQSLDSTIIHPDIVQQPPLDFMPYGFPLIHTICFVTCYSEDEEGLRTTLDSLSTTDYPNSHKLLMVVCDGLIKGSGNDKTTPEIALGMMDDFVTPPDEVKPYSYVAVASGSKRHNMAKIYAGFYKYDDSTIPPENQQRVPIITIVKCGTPAEQGAAKPGNRGKRDSQIILMSFLEKITFDERMTQLEFQLLKNIWQITGLMADFYETVLMVDADTKVFPDALTHMVAEMVKDPLIMGLCGETKIANKAQSWVTAIQVFEYYISHHQAKAFESVFGSVTCLPGCFSMYRIKSPKGSDGYWVPVLANPDIVERYSDNVTNTLHKKNLLLLGEDRFLSSLMLKTFPKRKQVFVPKAACKTIAPDKFKVLLSQRRRWINSTVHNLFELVLIRDLCGTFCFSMQFVIGIELIGTMVLPLAICFTIYVIIFAIVSKPTPVITLVLLAIILGLPGLIVVITATRWSYLWWMCVYICALPIWNFVLPSYAYWKFDDFSWGDTRTIAGGNKKAQDENEGEFDHSKIKMRTWREFEREDILNRKEESDSFVA.

The Cytoplasmic portion of the chain corresponds to 1 to 170 (MTGLNGDDPD…ETNDTLSFWQ (170 aa)). Disordered regions lie at residues 19–53 (DEES…NNPD) and 74–97 (PSST…GSVR). Residues 74 to 92 (PSSTGVNPNATRRSGSLRS) are compositionally biased toward polar residues. A Glycyl lysine isopeptide (Lys-Gly) (interchain with G-Cter in ubiquitin) cross-link involves residue Lys-136. The chain crosses the membrane as a helical span at residues 171–191 (MYCYFITFWAPAPILAFCGMP). Topologically, residues 192–340 (KKERQMAWRE…PNFTVENYAG (149 aa)) are extracellular. N-linked (GlcNAc...) asparagine glycosylation is found at Asn-303 and Asn-332. Residues 341-354 (WNCHTSKEDRDAFY) form a helical membrane-spanning segment. Residues 355–452 (GLKSKADVYF…SKTVGCIASD (98 aa)) lie on the Cytoplasmic side of the membrane. Residues 453-473 (VVLYVSLVFILSVVIIKFIIA) traverse the membrane as a helical segment. Over 474-891 (CYFRWTVARK…EYYISHHQAK (418 aa)) the chain is Extracellular. Phosphoserine is present on Ser-537. Position 538 is a phosphothreonine (Thr-538). Residues 892 to 910 (AFESVFGSVTCLPGCFSMY) form a helical membrane-spanning segment. Residues 911 to 1029 (RIKSPKGSDG…SMQFVIGIEL (119 aa)) lie on the Cytoplasmic side of the membrane. Residues 1030–1050 (IGTMVLPLAICFTIYVIIFAI) traverse the membrane as a helical segment. Topologically, residues 1051-1055 (VSKPT) are extracellular. A helical membrane pass occupies residues 1056 to 1076 (PVITLVLLAIILGLPGLIVVI). The Cytoplasmic portion of the chain corresponds to 1077 to 1165 (TATRWSYLWW…RKEESDSFVA (89 aa)).

This sequence belongs to the chitin synthase family. Class IV subfamily. As to quaternary structure, homodimer. May form higher order oligomers. Seems to interact with BNI4 and SKT5 which link CHS3 to septins. Glycosylated. Post-translationally, palmitoylated by PFA4; required for proper export from the ER.

It localises to the cell membrane. The protein resides in the bud neck. Its subcellular location is the cytoplasmic vesicle membrane. It catalyses the reaction [(1-&gt;4)-N-acetyl-beta-D-glucosaminyl](n) + UDP-N-acetyl-alpha-D-glucosamine = [(1-&gt;4)-N-acetyl-beta-D-glucosaminyl](n+1) + UDP + H(+). Its function is as follows. Polymerizes chitin, a structural polymer of the cell wall and septum, by transferring the sugar moiety of UDP-GlcNAc to the non-reducing end of the growing chitin polymer. Appears to be responsible for synthesis of the majority of the chitin found in the cell wall periphery. It is involved in the synthesis of the chitin ring that forms in the cell wall just before bud emergence. This ring remains at the base of the bud as the bud grows and ultimately forms part of the bud scar marking the division site on the mother cell. Also catalyzes the synthesis of chitin laid down during mating and spore cell-wall synthesis. The sequence is that of Chitin synthase 3 from Saccharomyces cerevisiae (strain ATCC 204508 / S288c) (Baker's yeast).